A 147-amino-acid chain; its full sequence is MGLQGQLSDVSSDSIPLMLLALLATFFRHVRSLLLFPSSAPVVVVTSNLSVLADQLNLNRLFSYRYSDNAASDCIVCLSKLKTGEEVRKLDCRHVFHKQCLEGWLQHLNFNCPLCRSPLLPHHHQGHGSDASISAFPLRSTSTASSH.

An RING-type; atypical zinc finger spans residues 74-116 (CIVCLSKLKTGEEVRKLDCRHVFHKQCLEGWLQHLNFNCPLCR).

As to quaternary structure, interacts with NAC19. As to expression, expressed in vascular tissue, root tips, embryos and pistils.

It is found in the cytoplasm. It localises to the nucleus. The catalysed reaction is S-ubiquitinyl-[E2 ubiquitin-conjugating enzyme]-L-cysteine + [acceptor protein]-L-lysine = [E2 ubiquitin-conjugating enzyme]-L-cysteine + N(6)-ubiquitinyl-[acceptor protein]-L-lysine.. It functions in the pathway protein modification; protein ubiquitination. Functionally, E3 ubiquitin-protein ligase involved in the positive regulation of abscisic acid (ABA) signaling and responses to salt and osmotic stresses during seed germination and early seedling development. Acts additively with RHA2A in regulating ABA signaling and drought response. Possesses E3 ubiquitin ligase activity in vitro. This chain is E3 ubiquitin-protein ligase RHA2B, found in Arabidopsis thaliana (Mouse-ear cress).